Here is an 833-residue protein sequence, read N- to C-terminus: Leucine--tRNA ligase (833 aa).

The 'HIGH' region motif lies at 41-52 (PYPSGAGLHVGH). Positions 610–614 (KMSKS) match the 'KMSKS' region motif. Lys-613 contacts ATP.

The protein belongs to the class-I aminoacyl-tRNA synthetase family.

The protein resides in the cytoplasm. The enzyme catalyses tRNA(Leu) + L-leucine + ATP = L-leucyl-tRNA(Leu) + AMP + diphosphate. In Streptococcus pyogenes serotype M18 (strain MGAS8232), this protein is Leucine--tRNA ligase.